The chain runs to 629 residues: tRNA uridine 5-carboxymethylaminomethyl modification enzyme MnmG (629 aa).

14–19 (GAGHAG) is an FAD binding site. NAD(+) is bound at residue 274–288 (GPRYCPSIEDKVVRF).

Belongs to the MnmG family. Homodimer. Heterotetramer of two MnmE and two MnmG subunits. Requires FAD as cofactor.

Its subcellular location is the cytoplasm. NAD-binding protein involved in the addition of a carboxymethylaminomethyl (cmnm) group at the wobble position (U34) of certain tRNAs, forming tRNA-cmnm(5)s(2)U34. The protein is tRNA uridine 5-carboxymethylaminomethyl modification enzyme MnmG of Xylella fastidiosa (strain Temecula1 / ATCC 700964).